An 88-amino-acid polypeptide reads, in one-letter code: MAVSRLPPAALSLKQFLQRQKVLCLYRDLQRTIRRVPHESDRKYLRDWARDEFRRNKSNTDQDAIRMMISQAHNHLEELRRSLALAGC.

The N-terminal 19 residues, 1 to 19 (MAVSRLPPAALSLKQFLQR), are a transit peptide targeting the mitochondrion.

Belongs to the complex I LYR family.

Its subcellular location is the mitochondrion. Functionally, involved in efficient integration of the N-module into mitochondrial respiratory chain complex I. In Danio rerio (Zebrafish), this protein is LYR motif-containing protein 2 (lyrm2).